We begin with the raw amino-acid sequence, 333 residues long: Thiamine-monophosphate kinase (333 aa).

4 residues coordinate Mg(2+): aspartate 44, serine 58, threonine 59, and aspartate 60. Histidine 67 contacts substrate. Residues aspartate 89 and aspartate 137 each contribute to the Mg(2+) site. ATP-binding positions include 136–137 and arginine 162; that span reads GD. Aspartate 224 lines the Mg(2+) pocket. Serine 226 contacts ATP. Aspartate 227 lines the Mg(2+) pocket. Substrate-binding residues include glutamate 278 and tryptophan 320.

The protein belongs to the thiamine-monophosphate kinase family.

The catalysed reaction is thiamine phosphate + ATP = thiamine diphosphate + ADP. It functions in the pathway cofactor biosynthesis; thiamine diphosphate biosynthesis; thiamine diphosphate from thiamine phosphate: step 1/1. Its function is as follows. Catalyzes the ATP-dependent phosphorylation of thiamine-monophosphate (TMP) to form thiamine-pyrophosphate (TPP), the active form of vitamin B1. This is Thiamine-monophosphate kinase from Mycobacterium tuberculosis (strain CDC 1551 / Oshkosh).